A 459-amino-acid polypeptide reads, in one-letter code: Vanillin aminotransferase (459 aa).

Pyridoxal 5'-phosphate is bound by residues 115–116 (GS) and D255. K284 bears the N6-(pyridoxal phosphate)lysine mark. 320-321 (FT) provides a ligand contact to pyridoxal 5'-phosphate. The stretch at 430–457 (LEELDELIRIYGKALKDTEKRVEELKSQ) forms a coiled coil.

Belongs to the class-III pyridoxal-phosphate-dependent aminotransferase family. In terms of tissue distribution, confined to the placenta of green fruits at high levels. Barely detectable in the pericarp and seeds as well as in the placenta of mature fruits.

The enzyme catalyses vanillin + L-alanine = vanillylamine + pyruvate. The protein operates within aromatic compound metabolism; phenylpropanoid biosynthesis. Its function is as follows. Involved in the biosynthesis of capsaicinoids natural products, pungent alkaloids synthesized from phenylpropanoid intermediates in the placental tissue of chili pepper fruit acting as repellant on herbivorous mammals and conferring spiciness to hot peppers. Can transfer an amine from vanillylamine to pyruvate forming vanillin and L-alanine. In Capsicum annuum (Capsicum pepper), this protein is Vanillin aminotransferase.